The following is a 302-amino-acid chain: Sulfate adenylyltransferase subunit 2 2 (302 aa).

The protein belongs to the PAPS reductase family. CysD subfamily. As to quaternary structure, heterodimer composed of CysD, the smaller subunit, and CysN.

It carries out the reaction sulfate + ATP + H(+) = adenosine 5'-phosphosulfate + diphosphate. Its pathway is sulfur metabolism; hydrogen sulfide biosynthesis; sulfite from sulfate: step 1/3. In terms of biological role, with CysN forms the ATP sulfurylase (ATPS) that catalyzes the adenylation of sulfate producing adenosine 5'-phosphosulfate (APS) and diphosphate, the first enzymatic step in sulfur assimilation pathway. APS synthesis involves the formation of a high-energy phosphoric-sulfuric acid anhydride bond driven by GTP hydrolysis by CysN coupled to ATP hydrolysis by CysD. In Alkalilimnicola ehrlichii (strain ATCC BAA-1101 / DSM 17681 / MLHE-1), this protein is Sulfate adenylyltransferase subunit 2 2.